Consider the following 277-residue polypeptide: Inositol monophosphatase 1 (277 aa).

E70, D90, I92, and D93 together coordinate Mg(2+). Residue E70 participates in substrate binding. Residue 92-95 participates in substrate binding; it reads IDGT. A Phosphothreonine modification is found at T168. Substrate is bound by residues 194 to 196, E213, and D220; that span reads GTA. Position 220 (D220) interacts with Mg(2+).

It belongs to the inositol monophosphatase superfamily. As to quaternary structure, homodimer. Mg(2+) serves as cofactor.

The protein resides in the cytoplasm. It catalyses the reaction a myo-inositol phosphate + H2O = myo-inositol + phosphate. The enzyme catalyses 1D-myo-inositol 1-phosphate + H2O = myo-inositol + phosphate. It carries out the reaction 1D-myo-inositol 2-phosphate + H2O = myo-inositol + phosphate. The catalysed reaction is 1D-myo-inositol 3-phosphate + H2O = myo-inositol + phosphate. It catalyses the reaction 1D-myo-inositol 4-phosphate + H2O = myo-inositol + phosphate. The enzyme catalyses 1D-myo-inositol 5-phosphate + H2O = myo-inositol + phosphate. It carries out the reaction 1D-myo-inositol 6-phosphate + H2O = myo-inositol + phosphate. The catalysed reaction is scyllo-inositol 1-phosphate + H2O = scyllo-inositol + phosphate. It catalyses the reaction alpha-D-galactose 1-phosphate + H2O = D-galactose + phosphate. The enzyme catalyses alpha-D-glucose 1-phosphate + H2O = D-glucose + phosphate. It carries out the reaction D-glucose 6-phosphate + H2O = D-glucose + phosphate. The catalysed reaction is beta-D-fructose 1-phosphate + H2O = D-fructose + phosphate. It catalyses the reaction glycerol 2-phosphate + H2O = glycerol + phosphate. The enzyme catalyses adenosine 2'-phosphate + H2O = adenosine + phosphate. It functions in the pathway polyol metabolism; myo-inositol biosynthesis; myo-inositol from D-glucose 6-phosphate: step 2/2. With respect to regulation, activity with myo-inositol monophosphates and D-galactose 1-phosphate is inhibited by Li(+), Ca(2+) and Mn(2+), but also by Mg(2+) at concentrations above 3 mM. In terms of biological role, phosphatase involved in the dephosphorylation of myo-inositol monophosphates to generate myo-inositol. Is also able to dephosphorylate scyllo-inositol-phosphate, myo-inositol 1,4-diphosphate, scyllo-inositol-1,3-diphosphate and scyllo-inositol-1,4-diphosphate. Also dephosphorylates in vitro other sugar-phosphates including D-galactose-1-phosphate, glucose-1-phosphate, glucose-6-phosphate, fructose-1-phosphate, beta-glycerophosphate and 2'-AMP. Responsible for the provision of inositol required for synthesis of phosphatidylinositols and polyphosphoinositides, and involved in maintaining normal brain function. Has been implicated as the pharmacological target for lithium (Li(+)) action in brain, which is used to treat bipolar affective disorder. Is equally active with 1D-myo-inositol 1-phosphate, 1D-myo-inositol 3-phosphate and D-galactose 1-phosphate. The chain is Inositol monophosphatase 1 from Homo sapiens (Human).